The following is a 1187-amino-acid chain: uncharacterized protein (1187 aa).

Disordered stretches follow at residues 302–405 (QKSQ…KPVG), 419–451 (QAFS…RASK), 511–551 (KAPG…LRLE), 1095–1134 (KSQR…KLPD), and 1148–1187 (PHLP…PASL). Over residues 321–333 (LPLSGPAGAPPLG) the composition is skewed to low complexity. Over residues 352–361 (SRRKARHKAS) the composition is skewed to basic residues. 2 stretches are compositionally biased toward low complexity: residues 422 to 435 (SPLL…SPAA) and 517 to 534 (GTTL…GEPP). Residues 1096-1107 (SQRTPQGEQSRN) are compositionally biased toward polar residues. Residues 1160-1174 (TGGSFSSEGTGSQTS) show a composition bias toward low complexity.

This is an uncharacterized protein from Mus musculus (Mouse).